Consider the following 567-residue polypeptide: Frizzled-7 (567 aa).

The N-terminal stretch at 1 to 31 (MRPAAGEAGAGLRWLGLAALLAALLGTPCAA) is a signal peptide. At 32–250 (AHHEDKAISV…EAEVRFARLW (219 aa)) the chain is on the extracellular side. The region spanning 42–161 (PDHGFCQPIS…HGAGEICVGQ (120 aa)) is the FZ domain. 5 disulfides stabilise this stretch: Cys47-Cys108, Cys55-Cys101, Cys92-Cys129, Cys118-Cys158, and Cys122-Cys146. A glycan (N-linked (GlcNAc...) asparagine) is linked at Asn61. N-linked (GlcNAc...) asparagine glycosylation is present at Asn162. The chain crosses the membrane as a helical span at residues 251 to 271 (VGVWSVLCCASTLFTVLTYLV). Residues 272–282 (DMRRFSYPERP) are Cytoplasmic-facing. The helical transmembrane segment at 283–303 (IIFLSGCYFMVAVAYAAGFLL) threads the bilayer. At 304–330 (EERVVCLERFSEDGYRTVAQGTKKEGC) the chain is on the extracellular side. The helical transmembrane segment at 331-351 (TILFMILYFFGMASSIWWVIL) threads the bilayer. The Cytoplasmic portion of the chain corresponds to 352 to 373 (SLTWFLAAGMKWGHEAIEANSQ). Residues 374-394 (YFHLAAWAVPAVKTITILAMG) form a helical membrane-spanning segment. At 395-417 (QVDGDVLSGVCYVGIYSVDSLRG) the chain is on the extracellular side. A helical transmembrane segment spans residues 418-438 (FVLAPLFVYLFIGTSFLLAGF). The Cytoplasmic portion of the chain corresponds to 439–464 (VSLFRIRTIMKHDGTKTEKLEKLMVR). A helical transmembrane segment spans residues 465–485 (IGVFSVLYTVPATIVVACYFY). Over 486–521 (EQAFRSTWEKTWLLQTCKTYAVPCPSHFAPMSPDFT) the chain is Extracellular. The chain crosses the membrane as a helical span at residues 522-542 (VFMIKYLMTMIVGITTGFWIW). Residues 543–567 (SGKTLQSWRRFYHRLSTGSKGETAV) lie on the Cytoplasmic side of the membrane. The Lys-Thr-X-X-X-Trp motif, mediates interaction with the PDZ domain of Dvl family members signature appears at 545–550 (KTLQSW). Residues 565-567 (TAV) carry the PDZ-binding motif.

The protein belongs to the G-protein coupled receptor Fz/Smo family. Expressed broadly in cranial ectoderm. Also expressed in the developing somites and in other cranial placodes, including the olfactory, lens, otic placodes (lateral half of the vesicle) and epibranchial placodes. Low level of expression in all the mesoderm derivatives in the limb buds.

Its subcellular location is the cell membrane. The protein resides in the endosome membrane. Receptor for Wnt proteins. Most of frizzled receptors are coupled to the beta-catenin canonical signaling pathway, which leads to the activation of disheveled proteins, inhibition of GSK-3 kinase, nuclear accumulation of beta-catenin and activation of Wnt target genes. A second signaling pathway involving PKC and calcium fluxes has been seen for some family members, but it is not yet clear if it represents a distinct pathway or if it can be integrated in the canonical pathway, as PKC seems to be required for Wnt-mediated inactivation of GSK-3 kinase. Both pathways seem to involve interactions with G-proteins. May be involved in transduction and intercellular transmission of polarity information during tissue morphogenesis and/or in differentiated tissues. In Gallus gallus (Chicken), this protein is Frizzled-7 (FZD7).